The sequence spans 156 residues: CRIB domain-containing protein RIC10 (156 aa).

The 14-residue stretch at 30–43 folds into the CRIB domain; that stretch reads IGFPTDVKHVAHIG. Residues 68–77 are compositionally biased toward polar residues; the sequence is RPSSFSNARP. The disordered stretch occupies residues 68-156; it reads RPSSFSNARP…SYKSTVSRLI (89 aa). Low complexity predominate over residues 78–96; the sequence is STSFFTSSSSTDFDQGSSQ. Basic residues predominate over residues 117–128; that stretch reads NNKKKSSRRKKS. Low complexity predominate over residues 129-156; it reads SSSSSSPKSSRSSVLSKSSYKSTVSRLI.

As to expression, expressed in roots, leaves, flowers and pollen.

The protein resides in the cytoplasm. Functionally, functions as a downstream effector of Rho-related GTP binding proteins of the 'Rho of Plants' (ROPs) family. Participates in the propagation of ROP GTPase signals in specific cellular responses. Is involved in pollen tube growth regulation. In Arabidopsis thaliana (Mouse-ear cress), this protein is CRIB domain-containing protein RIC10 (RIC10).